A 425-amino-acid chain; its full sequence is Histidine--tRNA ligase (425 aa).

Belongs to the class-II aminoacyl-tRNA synthetase family. As to quaternary structure, homodimer.

The protein resides in the cytoplasm. It catalyses the reaction tRNA(His) + L-histidine + ATP = L-histidyl-tRNA(His) + AMP + diphosphate + H(+). The sequence is that of Histidine--tRNA ligase from Shewanella oneidensis (strain ATCC 700550 / JCM 31522 / CIP 106686 / LMG 19005 / NCIMB 14063 / MR-1).